The primary structure comprises 383 residues: Glutamate 5-kinase (383 aa).

K17 is an ATP binding site. Residues S64, D151, and N165 each contribute to the substrate site. 185-186 (SD) lines the ATP pocket. Residues 291–367 (SGTIRVDAGA…DEIEGILGYN (77 aa)) form the PUA domain.

This sequence belongs to the glutamate 5-kinase family.

The protein localises to the cytoplasm. It catalyses the reaction L-glutamate + ATP = L-glutamyl 5-phosphate + ADP. The protein operates within amino-acid biosynthesis; L-proline biosynthesis; L-glutamate 5-semialdehyde from L-glutamate: step 1/2. Its function is as follows. Catalyzes the transfer of a phosphate group to glutamate to form L-glutamate 5-phosphate. This is Glutamate 5-kinase from Methanosarcina barkeri (strain Fusaro / DSM 804).